The sequence spans 335 residues: Endo-beta-N-acetylglucosaminidase F2 (335 aa).

The first 45 residues, 1–45 (MKTANFSFALCLSVVIMLFIKCTRSEQDLSVTKDAIAQKSGVTVS), serve as a signal peptide directing secretion. One can recognise a GH18 domain in the interval 61 to 321 (QISAGYYRTW…SSNDNTLRAP (261 aa)). O-linked (Man...) serine glycans are attached at residues Ser-73, Ser-89, and Ser-143. Glu-171 serves as the catalytic Proton donor.

Belongs to the glycosyl hydrolase 18 family. Monomer. Carbohydrates at Ser-73, Ser-89 and Ser-143 consist of (2-OMe)Man1-4GlcNAcU1-4GlcU1-4Glc1-4(2-OMe)GlcU1-4[(2-OMe)Rham1-2]Man.

It is found in the secreted. The catalysed reaction is an N(4)-(oligosaccharide-(1-&gt;3)-[oligosaccharide-(1-&gt;6)]-beta-D-Man-(1-&gt;4)-beta-D-GlcNAc-(1-&gt;4)-alpha-D-GlcNAc)-L-asparaginyl-[protein] + H2O = an oligosaccharide-(1-&gt;3)-[oligosaccharide-(1-&gt;6)]-beta-D-Man-(1-&gt;4)-D-GlcNAc + N(4)-(N-acetyl-beta-D-glucosaminyl)-L-asparaginyl-[protein]. Its function is as follows. Endohydrolysis of the di-N-acetylchitobiosyl unit in high-mannose glycopeptides and glycoproteins. Complex biantennary glycans are the preferred substrates. Tri- and tetraantennary glycans are not hydrolyzed, and high mannose glycans are very poor substrates. This chain is Endo-beta-N-acetylglucosaminidase F2 (endOF2), found in Elizabethkingia meningoseptica (Chryseobacterium meningosepticum).